The sequence spans 255 residues: Taurine import ATP-binding protein TauB (255 aa).

The ABC transporter domain maps to Leu-2–Ser-229. Gly-34–Thr-41 provides a ligand contact to ATP.

This sequence belongs to the ABC transporter superfamily. Taurine importer (TC 3.A.1.17.1) family. In terms of assembly, the complex is composed of two ATP-binding proteins (TauB), two transmembrane proteins (TauC) and a solute-binding protein (TauA).

The protein localises to the cell inner membrane. The catalysed reaction is taurine(out) + ATP + H2O = taurine(in) + ADP + phosphate + H(+). In terms of biological role, part of the ABC transporter complex TauABC involved in taurine import. Responsible for energy coupling to the transport system. This Escherichia coli O6:H1 (strain CFT073 / ATCC 700928 / UPEC) protein is Taurine import ATP-binding protein TauB.